The sequence spans 483 residues: Myosin-binding protein H (483 aa).

Over residues 1–15 (MTGKATSEASVSTPE) the composition is skewed to polar residues. Positions 1-78 (MTGKATSEAS…PEPPSEDVPS (78 aa)) are disordered. Phosphothreonine is present on residues Thr-2, Thr-6, and Thr-26. Low complexity predominate over residues 41–66 (QEQAPEPQKPQAQDPAAPAASAMPAA). The Fibronectin type-III 1 domain occupies 79–174 (APLRLTLEDV…LDQPVHIQEI (96 aa)). Positions 178-266 (PKIRVPRHLR…EGLEAKASID (89 aa)) constitute an Ig-like C2-type 1 domain. One can recognise a Fibronectin type-III 2 domain in the interval 275–370 (PPSSIKLLDV…TKELAHIHKA (96 aa)). An Ig-like C2-type 2 domain is found at 388–472 (PSFTQPLADH…INVLGEASVD (85 aa)).

The protein belongs to the immunoglobulin superfamily. MyBP family. In terms of tissue distribution, skeletal muscle. Expressed at low levels in heart ventricles.

Its function is as follows. Binds to myosin; probably involved in interaction with thick myofilaments in the A-band. This Mus musculus (Mouse) protein is Myosin-binding protein H (Mybph).